A 590-amino-acid polypeptide reads, in one-letter code: Cyclin-dependent kinase-like 3 (590 aa).

One can recognise a Protein kinase domain in the interval 4–286 (YETLGKVGEG…SSDLLHHEYF (283 aa)). ATP-binding positions include 10-18 (VGEGSYGTV) and Lys33. A [NKR]KIAxRE motif is present at residues 45–51 (KIAMREI). Residue Asp125 is the Proton acceptor of the active site. Thr158 carries the phosphothreonine modification. Tyr160 is subject to Phosphotyrosine. Disordered stretches follow at residues 459-508 (RAKK…SNEN) and 547-590 (LKRE…PDVE). Residues 466 to 477 (SSQSIGQVMPNS) are compositionally biased toward polar residues. Composition is skewed to basic and acidic residues over residues 547-556 (LKRESKKTDS) and 580-590 (TERKKNLPDVE).

It belongs to the protein kinase superfamily. CMGC Ser/Thr protein kinase family. CDC2/CDKX subfamily.

It localises to the cytoplasm. The enzyme catalyses L-seryl-[protein] + ATP = O-phospho-L-seryl-[protein] + ADP + H(+). It carries out the reaction L-threonyl-[protein] + ATP = O-phospho-L-threonyl-[protein] + ADP + H(+). This Macaca fascicularis (Crab-eating macaque) protein is Cyclin-dependent kinase-like 3.